The primary structure comprises 109 residues: Large ribosomal subunit protein uL23 (109 aa).

Belongs to the universal ribosomal protein uL23 family. Part of the 50S ribosomal subunit. Contacts protein L29, and trigger factor when it is bound to the ribosome.

One of the early assembly proteins it binds 23S rRNA. One of the proteins that surrounds the polypeptide exit tunnel on the outside of the ribosome. Forms the main docking site for trigger factor binding to the ribosome. In Prosthecochloris aestuarii (strain DSM 271 / SK 413), this protein is Large ribosomal subunit protein uL23.